Reading from the N-terminus, the 268-residue chain is Mediator of RNA polymerase II transcription subunit 18 (268 aa).

Belongs to the Mediator complex subunit 18 family. As to quaternary structure, component of the Mediator complex.

The protein localises to the nucleus. Functionally, component of the Mediator complex, a coactivator involved in the regulated transcription of nearly all RNA polymerase II-dependent genes. Mediator functions as a bridge to convey information from gene-specific regulatory proteins to the basal RNA polymerase II transcription machinery. Mediator is recruited to promoters by direct interactions with regulatory proteins and serves as a scaffold for the assembly of a functional preinitiation complex with RNA polymerase II and the general transcription factors. In Neosartorya fischeri (strain ATCC 1020 / DSM 3700 / CBS 544.65 / FGSC A1164 / JCM 1740 / NRRL 181 / WB 181) (Aspergillus fischerianus), this protein is Mediator of RNA polymerase II transcription subunit 18 (srb5).